A 125-amino-acid polypeptide reads, in one-letter code: Probable 4-amino-4-deoxy-L-arabinose-phosphoundecaprenol flippase subunit ArnF (125 aa).

At 1 to 2 (MG) the chain is on the cytoplasmic side. A helical transmembrane segment spans residues 3-23 (VMWGLISVAIASLAQLSLGFA). The Periplasmic portion of the chain corresponds to 24–33 (MMRLPSIAHP). The helical transmembrane segment at 34-54 (LAFISGLGAFNAATLALFAGL) threads the bilayer. Topologically, residues 55-76 (AGYLVSVFCWQKTLHMLALSKA) are cytoplasmic. The chain crosses the membrane as a helical span at residues 77–97 (YALLSLSYVLVWVASMLLPGL). At 98-100 (QGA) the chain is on the periplasmic side. Residues 101-121 (FSLKAMLGVLCIMAGVMLIFL) form a helical membrane-spanning segment. Over 122-125 (PARS) the chain is Cytoplasmic.

Belongs to the ArnF family. Heterodimer of ArnE and ArnF.

The protein resides in the cell inner membrane. It participates in bacterial outer membrane biogenesis; lipopolysaccharide biosynthesis. In terms of biological role, translocates 4-amino-4-deoxy-L-arabinose-phosphoundecaprenol (alpha-L-Ara4N-phosphoundecaprenol) from the cytoplasmic to the periplasmic side of the inner membrane. This is Probable 4-amino-4-deoxy-L-arabinose-phosphoundecaprenol flippase subunit ArnF from Salmonella paratyphi A (strain ATCC 9150 / SARB42).